Reading from the N-terminus, the 311-residue chain is p-hydroxybenzoic acid efflux pump subunit AaeA (311 aa).

The chain crosses the membrane as a helical span at residues 11-31 (VGITVLVVVLAVIAIFNVWAF).

It belongs to the membrane fusion protein (MFP) (TC 8.A.1) family.

Its subcellular location is the cell inner membrane. Forms an efflux pump with AaeB. The protein is p-hydroxybenzoic acid efflux pump subunit AaeA of Yersinia pestis bv. Antiqua (strain Antiqua).